Consider the following 235-residue polypeptide: Hydroxyacylglutathione hydrolase (235 aa).

Zn(2+) contacts are provided by His53, His55, Asp57, His58, His109, Asp127, and His165.

This sequence belongs to the metallo-beta-lactamase superfamily. Glyoxalase II family. As to quaternary structure, monomer. Requires Zn(2+) as cofactor.

It carries out the reaction an S-(2-hydroxyacyl)glutathione + H2O = a 2-hydroxy carboxylate + glutathione + H(+). It functions in the pathway secondary metabolite metabolism; methylglyoxal degradation; (R)-lactate from methylglyoxal: step 2/2. Thiolesterase that catalyzes the hydrolysis of S-D-lactoyl-glutathione to form glutathione and D-lactic acid. The polypeptide is Hydroxyacylglutathione hydrolase (Actinobacillus pleuropneumoniae serotype 7 (strain AP76)).